A 217-amino-acid polypeptide reads, in one-letter code: Large ribosomal subunit protein uL1A (217 aa).

At serine 2 the chain carries N-acetylserine. At lysine 47 the chain carries N6-methyllysine; by RKM5. Phosphoserine is present on residues serine 79 and serine 86.

It belongs to the universal ribosomal protein uL1 family. In terms of assembly, component of the large ribosomal subunit (LSU). Mature yeast ribosomes consist of a small (40S) and a large (60S) subunit. The 40S small subunit contains 1 molecule of ribosomal RNA (18S rRNA) and 33 different proteins (encoded by 57 genes). The large 60S subunit contains 3 rRNA molecules (25S, 5.8S and 5S rRNA) and 46 different proteins (encoded by 81 genes). uL1 forms part of the L1 stalk. N-terminally acetylated by acetyltransferase NatA.

Its subcellular location is the cytoplasm. Component of the ribosome, a large ribonucleoprotein complex responsible for the synthesis of proteins in the cell. The small ribosomal subunit (SSU) binds messenger RNAs (mRNAs) and translates the encoded message by selecting cognate aminoacyl-transfer RNA (tRNA) molecules. The large subunit (LSU) contains the ribosomal catalytic site termed the peptidyl transferase center (PTC), which catalyzes the formation of peptide bonds, thereby polymerizing the amino acids delivered by tRNAs into a polypeptide chain. The nascent polypeptides leave the ribosome through a tunnel in the LSU and interact with protein factors that function in enzymatic processing, targeting, and the membrane insertion of nascent chains at the exit of the ribosomal tunnel. uL1 forms part of the L1 stalk, a mobile element that plays a role in evacuating the exit-site tRNA. The sequence is that of Large ribosomal subunit protein uL1A from Saccharomyces cerevisiae (strain ATCC 204508 / S288c) (Baker's yeast).